Reading from the N-terminus, the 261-residue chain is Potassium/proton antiporter CemA (261 aa).

Transmembrane regions (helical) follow at residues 47-67 (FLVF…GPWV) and 138-158 (IISH…YFIM).

This sequence belongs to the CemA family.

It localises to the plastid. Its subcellular location is the chloroplast inner membrane. It carries out the reaction K(+)(in) + H(+)(out) = K(+)(out) + H(+)(in). Contributes to K(+)/H(+) antiport activity by supporting proton efflux to control proton extrusion and homeostasis in chloroplasts in a light-dependent manner to modulate photosynthesis. Prevents excessive induction of non-photochemical quenching (NPQ) under continuous-light conditions. Indirectly promotes efficient inorganic carbon uptake into chloroplasts. The chain is Potassium/proton antiporter CemA from Ginkgo biloba (Ginkgo).